Consider the following 256-residue polypeptide: UstYa family oxidase phomYc (256 aa).

A helical transmembrane segment spans residues 38 to 58; the sequence is LVLVLQFVLIISLLASLHILG. N-linked (GlcNAc...) asparagine glycans are attached at residues Asn64 and Asn132. The HXXHC 1 signature appears at 158–162; sequence HQLHC. An N-linked (GlcNAc...) asparagine glycan is attached at Asn179. Positions 193 to 197 match the HXXHC 2 motif; the sequence is HIDHC.

Belongs to the ustYa family.

The protein localises to the membrane. It participates in mycotoxin biosynthesis. Its function is as follows. UstYa family oxidase; part of the gene cluster that mediates the biosynthesis of the phomopsins, a group of hexapeptide mycotoxins which infects lupins and causes lupinosis disease in livestock. Within the pathway, phomYc catalyzes the desaturation of the Ile moiety into 2,3-dehydroisoleucine (dIle). The pathway starts with the processing of the precursor phomA by several endopeptidases including kexin proteases as well as the cluster-specific S41 family peptidase phomP1 and the oligopeptidase phomG to produce 10 identical copies of the hexapeptide Tyr-Val-Ile-Pro-Ile-Asp. After being excised from the precursor peptide, the core peptides are cyclized and modified post-translationally by enzymes encoded within the gene cluster. The timing and order of proteolysis of the phomA precursor and PTMs are still unknown. Two tyrosinase-like enzymes, phomQ1 and phomQ2, catalyze the chlorination and hydroxylation of Tyr, respectively. PhomYb, is proposed to be involved in the construction of the macrocyclic structure. The other 4 ustYa family proteins may be involved in PTMs that generate the unique structure of phomopsin A. PhomYa is required for the hydroxylation of C-beta of Tyr. PhomYc, phomYd, and phomYe are responsible for the biosynthesis of 2,3-dehydroisoleucine (dIle), 2,3-dehydroaspartic acid (dAsp), and 3,4-dehydroproline (dPro), respectively. While dIle formation by phomYc is indispensable for the installation of dAsp by phomYd, the order of the other PTMs have not been elucidated yet. Most of the biosynthetic enzymes likely have broad substrate specificity, and thus, there might be a metabolic grid from a precursor to phomopsin A. The enzyme(s) responsible for the biosynthesis of 3,4-dehydrovaline (dVal) have also not been identified yet. Finally, phomM acts as an S-adenosylmethionine-dependent alpha-N-methyltransferase that catalyzes two successive N-methylation reactions, converting N-desmethyl-phomopsin A to phomopsin A and phomopsin A further to an N,N-dimethylated congener called phomopsin E. The chain is UstYa family oxidase phomYc from Diaporthe leptostromiformis (Lupinosis disease fungus).